A 266-amino-acid polypeptide reads, in one-letter code: Undecaprenyl-diphosphatase (266 aa).

A run of 8 helical transmembrane segments spans residues M1 to I21, Q39 to F59, W87 to I107, L111 to A131, V144 to T164, A183 to V203, A218 to L238, and M246 to L266.

The protein belongs to the UppP family.

It is found in the cell inner membrane. The catalysed reaction is di-trans,octa-cis-undecaprenyl diphosphate + H2O = di-trans,octa-cis-undecaprenyl phosphate + phosphate + H(+). Its function is as follows. Catalyzes the dephosphorylation of undecaprenyl diphosphate (UPP). Confers resistance to bacitracin. The chain is Undecaprenyl-diphosphatase from Shewanella piezotolerans (strain WP3 / JCM 13877).